A 277-amino-acid polypeptide reads, in one-letter code: MQLMRFDKPIGTLLLLHPTLWALFAAAGGIPSSSILIIFILGVIVMRAAGCVINDYADRHIDGKVKRTSQRPLATGRVTTVEAKVLFFVLLIIAFLLDLSLNQYAFLLSFVAVALAVIYPFMKRFTHLPQVVLGMAFGWAIPMAYGAVIEDLPLTCWLLFLANILWTVAYDTQYAMVDRDDDLRIGVKSTAILFAQYDNKIIALLQFLSLILFILFGWLSEYHIGYFIVLALTSTLFIYQCWLTKQRVREQCFKAFLNNNYFGFGIFIAILVGIYGF.

Transmembrane regions (helical) follow at residues 24–44 (FAAA…LGVI), 81–101 (VEAK…DLSL), 102–122 (NQYA…YPFM), 129–149 (PQVV…GAVI), 152–172 (LPLT…AYDT), 201–221 (IIAL…WLSE), 224–244 (IGYF…CWLT), and 255–275 (AFLN…VGIY).

This sequence belongs to the UbiA prenyltransferase family. Mg(2+) is required as a cofactor.

The protein localises to the cell inner membrane. The catalysed reaction is all-trans-octaprenyl diphosphate + 4-hydroxybenzoate = 4-hydroxy-3-(all-trans-octaprenyl)benzoate + diphosphate. It functions in the pathway cofactor biosynthesis; ubiquinone biosynthesis. Functionally, catalyzes the prenylation of para-hydroxybenzoate (PHB) with an all-trans polyprenyl group. Mediates the second step in the final reaction sequence of ubiquinone-8 (UQ-8) biosynthesis, which is the condensation of the polyisoprenoid side chain with PHB, generating the first membrane-bound Q intermediate 3-octaprenyl-4-hydroxybenzoate. In Haemophilus ducreyi (strain 35000HP / ATCC 700724), this protein is 4-hydroxybenzoate octaprenyltransferase.